Consider the following 969-residue polypeptide: MVKNLKRKERDEHESDSDEEIDIAGNLVADGSDSESDDSSDGSDEEVQDVIEYSSDEEEPAKPAKAVKKKVEDKSFPSLELSDDEDEKKKVDNDDDDVNAYFSVNTDAKSKHKKGSFASFGLSKLILVNISKRGFRQPTPIQRKTIPLILQNRDIVGMARTGSGKTAAFVLPMIEKLKTHSSKIGARAIILSPSRELAMQTHSVFKEFSRGTHLRSVLLTGGDSLEDQFGMMMTNPDVIIATPGRFLHLKVEMNLDLKSVEYAVFDEADRLFEMGFQEQLNELLAALPSSRQTLLFSATLPTSLVDFAKAGLVNPVLVRLDAESKISDNLEMLFLSTKNDEREANLLYILQEVIKLPLATPEQIKQLNDNKADDSDESAEEDEDKKRRKRKSFNRKAMPKANELPSEKATVVFVPTRHHVEYLSNLLKDCGYLVSYIYGALDQHARKSQLYNFRIGLTSILVVTDVAARGVDIPMLANVVNYSLPASSKIFIHRVGRTARAGNRGWAYSIVSENELPYLLDLELFLGRKILLTPMYEALERLSKEKWVAEGNDETLFQSPKISYTSRMVLGSCPRLDIEALSELYNNLMKSNFDLDMAKKTALKAEKLYFRTRTSASPESLKRSKEIISSGWDEQNVLFGKNLEKEKNAFLEKLQNRRNKETVFEFTRNPEDEMANLMHRRRRAIAPIQRKAKERKELLEKERMAGLTHALEDEILKGDDAEVGYTVTEDTLKAFEDADTILAEQENASKKKKKTFRDPNFFLSHYAPANEIQDKQLELSGGFINEAAQSAYDLNSDDKVQVHKQTATVKWDKKRKKYVNMNGIDNKKYIIGESGQKIAASFRSGKFDEWSKARKLAPLKTGANESSIPSNLLVDPTRGPGKSGSKLPNGKFKHKLEKAPRLPDKKRDDYHKQKKKVESALERGIAVKGYNNAPAFKSELKSVAQIRKDRKTKENRHAKNARPSKKRKF.

Disordered regions lie at residues 1 to 73 (MVKN…KVED) and 78 to 97 (SLEL…DDDD). Residues 32-59 (SDSESDDSSDGSDEEVQDVIEYSSDEEE) are compositionally biased toward acidic residues. The Q motif signature appears at 115–143 (GSFASFGLSKLILVNISKRGFRQPTPIQR). The Helicase ATP-binding domain maps to 146–318 (IPLILQNRDI…KAGLVNPVLV (173 aa)). 159-166 (ARTGSGKT) contributes to the ATP binding site. The short motif at 266-269 (DEAD) is the DEAD box element. 3 disordered regions span residues 366–402 (QLND…PKAN), 860–924 (KTGA…LERG), and 946–969 (IRKD…KRKF). Positions 374–383 (DSDESAEEDE) are enriched in acidic residues. Residues 386–398 (KRRKRKSFNRKAM) are compositionally biased toward basic residues. One can recognise a Helicase C-terminal domain in the interval 396–543 (KAMPKANELP…PMYEALERLS (148 aa)). Over residues 897-921 (EKAPRLPDKKRDDYHKQKKKVESAL) the composition is skewed to basic and acidic residues. Basic residues predominate over residues 958-969 (AKNARPSKKRKF).

It belongs to the DEAD box helicase family. DDX54/DBP10 subfamily.

It is found in the nucleus. Its subcellular location is the nucleolus. It catalyses the reaction ATP + H2O = ADP + phosphate + H(+). In terms of biological role, ATP-binding RNA helicase involved in the biogenesis of 60S ribosomal subunits and is required for the normal formation of 25S and 5.8S rRNAs. The polypeptide is ATP-dependent RNA helicase DBP10 (DBP10) (Candida glabrata (strain ATCC 2001 / BCRC 20586 / JCM 3761 / NBRC 0622 / NRRL Y-65 / CBS 138) (Yeast)).